A 579-amino-acid chain; its full sequence is GPI alpha-1,2-mannosyltransferase 4 (579 aa).

A run of 8 helical transmembrane segments spans residues 131-151 (LLLT…APPM), 156-173 (WNAL…VFYT), 180-200 (IEGL…TWGP), 216-236 (LGGI…FAVV), 258-278 (ALVL…TDSW), 369-389 (YLLL…HQEA), 391-411 (FLIP…QPVP), and 416-436 (VVLF…GGLV).

This sequence belongs to the glycosyltransferase 22 family. PIGZ subfamily. In terms of tissue distribution, widely expressed at low level, with highest level in brain and colon.

It localises to the endoplasmic reticulum membrane. Its pathway is glycolipid biosynthesis; glycosylphosphatidylinositol-anchor biosynthesis. Functionally, alpha-1,2-mannosyltransferase that catalyzes the transfer of the fourth mannose, via an alpha-1,2 bond, from a dolichol-phosphate-mannose (Dol-P-Man) to an alpha-D-Man-(1-&gt;2)-alpha-D-Man-(1-&gt;6)-2-PEtn-alpha-D-Man-(1-&gt;4)-alpha-D-GlcN-(1-&gt;6)-(1-radyl,2-acyl-sn-glycero-3-phospho)-2-acyl-inositol (also termed H6) intermediate and participates in the twelfth step of the glycosylphosphatidylinositol-anchor biosynthesis. The presence of a fourth mannose in GPI is facultative, suggesting that it only exists in some tissues. In Homo sapiens (Human), this protein is GPI alpha-1,2-mannosyltransferase 4.